Here is a 690-residue protein sequence, read N- to C-terminus: Glycine--tRNA ligase beta subunit (690 aa).

It belongs to the class-II aminoacyl-tRNA synthetase family. As to quaternary structure, tetramer of two alpha and two beta subunits.

It localises to the cytoplasm. It carries out the reaction tRNA(Gly) + glycine + ATP = glycyl-tRNA(Gly) + AMP + diphosphate. This Buchnera aphidicola subsp. Acyrthosiphon pisum (strain Tuc7) protein is Glycine--tRNA ligase beta subunit.